The sequence spans 63 residues: Toxin S6C6 (63 aa).

5 disulfide bridges follow: Cys3–Cys24, Cys6–Cys11, Cys17–Cys39, Cys43–Cys55, and Cys56–Cys61.

This sequence belongs to the three-finger toxin family. Ancestral subfamily. Orphan group XIX sub-subfamily. In terms of tissue distribution, expressed by the venom gland.

It is found in the secreted. May enhance presynaptic acetylcholine release. This chain is Toxin S6C6, found in Dendroaspis jamesoni kaimosae (Eastern Jameson's mamba).